The chain runs to 793 residues: MEARVERAVQKRQVLFLCVFLGMSWAGAEPLRYFVAEETERGTFLTNLAKDLGLGVGELRARGTRIVSDQNMQILLLSSLTGDLLLNEKLDREELCGPREPCVLPFQLLLEKPFQIFRAELWVRDINDHAPVFLDREISLKILESTTPGAAFLLESAQDSDVGTNSLSNYTISPNAYFHINVHDSGEGNIYPELVLNQVLDREEIPEFSLTLTALDGGSPPRSGTALVRILVLDVNDNAPDFVRSLYKVQVPENSPVGSMVVSVSARDLDTGSNGEIAYAFSYATERILKTFQINPTSGSLHLKAQLDYEAIQTYTLTIQAKDGGGLSGKCTVVVDVTDINDNRPELLLSSLTSPIAENSPETVVAVFRIRDRDSGNNGKTVCSIQDDVPFILKPSVENFYTLVTEKPLDRERNTEYNITITVTDLGTPRLKTEHNITVLVSDVNDNAPAFTQTSYTLFVRENNSPALPIGSVSATDRDSGTNAQVIYSLLPSQDPHLPLASLVSINADNGHLFALRSLDYEALQAFEFRVGATDRGSPALSSEALVRVLVLDANDNSPFVLYPLQNSSAPCTEPLPRAAEPGYLVTKVVAVDGDSGQNAWLSYQLLKATEPGLFGVWAHNGEVRTARLLSERDAAKQRLVVLVKDNGEPPRSATATLHVLLVDGFSQPYLRLPEAAPDQANSLTVYLVVALASVSSLFLLSVLLFVAVRLCRRSRAAPVGRCSVPEGPFPRHLVDLSGTGTLSQSYQYEVCLTGGSGTNEFKFLKPIIPNLLPQSTGREVEENRPFQNNLGF.

Positions 1–26 (MEARVERAVQKRQVLFLCVFLGMSWA) are cleaved as a signal peptide. The Extracellular segment spans residues 27-688 (GAEPLRYFVA…DQANSLTVYL (662 aa)). Cadherin domains are found at residues 35 to 133 (VAEE…APVF), 138 to 242 (ISLK…APDF), 247 to 347 (YKVQ…RPEL), 352 to 451 (LTSP…APAF), and 456 to 561 (YTLF…SPFV). The N-linked (GlcNAc...) asparagine glycan is linked to Asn-169. N-linked (GlcNAc...) asparagine glycosylation is found at Asn-418 and Asn-436. Asn-567 is a glycosylation site (N-linked (GlcNAc...) asparagine). In terms of domain architecture, Cadherin 6 spans 568 to 671 (SSAPCTEPLP…LVDGFSQPYL (104 aa)). A helical transmembrane segment spans residues 689–709 (VVALASVSSLFLLSVLLFVAV). Topologically, residues 710 to 793 (RLCRRSRAAP…NRPFQNNLGF (84 aa)) are cytoplasmic.

It localises to the cell membrane. Functionally, potential calcium-dependent cell-adhesion protein. May be involved in the establishment and maintenance of specific neuronal connections in the brain. This Homo sapiens (Human) protein is Protocadherin beta-7 (PCDHB7).